The primary structure comprises 365 residues: UDP-N-acetylglucosamine--N-acetylmuramyl-(pentapeptide) pyrophosphoryl-undecaprenol N-acetylglucosamine transferase (365 aa).

UDP-N-acetyl-alpha-D-glucosamine is bound by residues 17-19 (TGG), asparagine 129, arginine 167, serine 194, isoleucine 250, 269-274 (ALTVSE), and glutamine 295.

Belongs to the glycosyltransferase 28 family. MurG subfamily.

The protein localises to the cell inner membrane. The catalysed reaction is di-trans,octa-cis-undecaprenyl diphospho-N-acetyl-alpha-D-muramoyl-L-alanyl-D-glutamyl-meso-2,6-diaminopimeloyl-D-alanyl-D-alanine + UDP-N-acetyl-alpha-D-glucosamine = di-trans,octa-cis-undecaprenyl diphospho-[N-acetyl-alpha-D-glucosaminyl-(1-&gt;4)]-N-acetyl-alpha-D-muramoyl-L-alanyl-D-glutamyl-meso-2,6-diaminopimeloyl-D-alanyl-D-alanine + UDP + H(+). Its pathway is cell wall biogenesis; peptidoglycan biosynthesis. Its function is as follows. Cell wall formation. Catalyzes the transfer of a GlcNAc subunit on undecaprenyl-pyrophosphoryl-MurNAc-pentapeptide (lipid intermediate I) to form undecaprenyl-pyrophosphoryl-MurNAc-(pentapeptide)GlcNAc (lipid intermediate II). The sequence is that of UDP-N-acetylglucosamine--N-acetylmuramyl-(pentapeptide) pyrophosphoryl-undecaprenol N-acetylglucosamine transferase from Shewanella pealeana (strain ATCC 700345 / ANG-SQ1).